The chain runs to 254 residues: Ciliary microtubule associated protein 1A (254 aa).

STPGR repeat units lie at residues 180–205 and 216–241; these read PGPA…MAAR and PGPG…FGIK. Positions 207 to 228 are disordered; it reads EPPGDKTLKPGPGAHSPEKVTL.

The protein belongs to the CIMAP family. Microtubule inner protein component of sperm flagellar doublet microtubules. As to expression, testis-specific (at protein level). Expression restricted to the germ cell fraction, absent in somatic cell fractions such as Sertoli and Leydig cells. Expression detected in the third week postpartum (23 days) after haploid germ cells developed, expression increased with age. Expressed in the tails of elongated spermatids sticking out toward the tubular lumen, and in cytoplasmic droplets still attached to the spermatid tail membrane. Expressed in the tails of mature sperm, from the connecting piece proximal to the head, along the middle and principal pieces, down to the distal end piece.

It is found in the cytoplasm. The protein resides in the cytoskeleton. Its subcellular location is the flagellum axoneme. Its function is as follows. Outer dense fibers are filamentous structures located on the outside of the axoneme in the midpiece and principal piece of the mammalian sperm tail. May help to maintain the passive elastic structures and elastic recoil of the sperm tail. The chain is Ciliary microtubule associated protein 1A (Cimap1a) from Mus musculus (Mouse).